The primary structure comprises 48 residues: Photosystem II reaction center protein K (48 aa).

The propeptide occupies 1–11 (MFLFNLEQSIG). A helical transmembrane segment spans residues 23 to 43 (LVDVLPIIPLLFLLLAFVWQA).

The protein belongs to the PsbK family. In terms of assembly, PSII is composed of 1 copy each of membrane proteins PsbA, PsbB, PsbC, PsbD, PsbE, PsbF, PsbH, PsbI, PsbJ, PsbK, PsbL, PsbM, PsbT, PsbX, PsbY, PsbZ, Psb30/Ycf12, at least 3 peripheral proteins of the oxygen-evolving complex and a large number of cofactors. It forms dimeric complexes.

The protein resides in the plastid. It localises to the chloroplast thylakoid membrane. Its function is as follows. One of the components of the core complex of photosystem II (PSII). PSII is a light-driven water:plastoquinone oxidoreductase that uses light energy to abstract electrons from H(2)O, generating O(2) and a proton gradient subsequently used for ATP formation. It consists of a core antenna complex that captures photons, and an electron transfer chain that converts photonic excitation into a charge separation. The chain is Photosystem II reaction center protein K from Lepocinclis buetschlii.